Reading from the N-terminus, the 371-residue chain is Anhydro-N-acetylmuramic acid kinase (371 aa).

ATP is bound at residue 9–16 (GTSLDAVD).

It belongs to the anhydro-N-acetylmuramic acid kinase family.

The catalysed reaction is 1,6-anhydro-N-acetyl-beta-muramate + ATP + H2O = N-acetyl-D-muramate 6-phosphate + ADP + H(+). Its pathway is amino-sugar metabolism; 1,6-anhydro-N-acetylmuramate degradation. It participates in cell wall biogenesis; peptidoglycan recycling. Catalyzes the specific phosphorylation of 1,6-anhydro-N-acetylmuramic acid (anhMurNAc) with the simultaneous cleavage of the 1,6-anhydro ring, generating MurNAc-6-P. Is required for the utilization of anhMurNAc either imported from the medium or derived from its own cell wall murein, and thus plays a role in cell wall recycling. The polypeptide is Anhydro-N-acetylmuramic acid kinase (Caulobacter vibrioides (strain ATCC 19089 / CIP 103742 / CB 15) (Caulobacter crescentus)).